An 83-amino-acid chain; its full sequence is MKASMFLALAGLVLLFVVGYASESEEKEFPIELLSKIFAVDVFKGEERGCKGFGDSCTPGKNECCPNHACSNKHKWCKVYLGK.

Positions 1-21 (MKASMFLALAGLVLLFVVGYA) are cleaved as a signal peptide. Residues 22–48 (SESEEKEFPIELLSKIFAVDVFKGEER) constitute a propeptide that is removed on maturation. Intrachain disulfides connect Cys-50/Cys-65, Cys-57/Cys-70, and Cys-64/Cys-77. Leu-81 is subject to Leucine amide.

Belongs to the neurotoxin 10 (Hwtx-1) family. 15 (Hntx-3) subfamily. Monomer. Expressed by the venom gland.

The protein resides in the secreted. Functionally, lethal neurotoxin. Selectively blocks tetrodotoxin-sensitive voltage-gated sodium channels (Nav). Does not affect tetrodotoxin-resistant voltage-gated sodium channels or calcium channels. The polypeptide is Mu-theraphotoxin-Hhn2j 1 (Cyriopagopus hainanus (Chinese bird spider)).